We begin with the raw amino-acid sequence, 1040 residues long: Protocadherin-10 (1040 aa).

An N-terminal signal peptide occupies residues 1-18; it reads MIVLLLFALLWMVEGVFS. Cadherin domains follow at residues 19–122, 123–250, 251–358, 359–463, 464–574, and 582–690; these read QLHY…PPSF, PEPD…VPAF, DQPV…APEI, SFST…APRF, SQPV…APAI, and NGTP…GGGG. The Extracellular portion of the chain corresponds to 19–715; it reads QLHYTVQEEQ…GGGETSLDLT (697 aa). Residues 207-223 show a composition bias toward gly residues; that stretch reads GGGGGVGEGGGGGGGAG. The interval 207-228 is disordered; it reads GGGGGVGEGGGGGGGAGLPPQQ. N-linked (GlcNAc...) asparagine glycosylation is present at Asn273. A glycan (N-linked (GlcNAc...) asparagine) is linked at Asn557. Gly residues predominate over residues 686–697; it reads QGGGGSGGGGSG. Positions 686 to 708 are disordered; sequence QGGGGSGGGGSGEHQRPSRSGGG. A helical membrane pass occupies residues 716–736; that stretch reads LILIIALGSVSFIFLLAMIVL. The Cytoplasmic portion of the chain corresponds to 737–1040; the sequence is AVRCQKEKKL…PPYLTRKRIC (304 aa). The interval 899-927 is disordered; that stretch reads AFQEADIVSSKDSGHGDSEQGDSDHDATN. The segment covering 910-926 has biased composition (basic and acidic residues); the sequence is DSGHGDSEQGDSDHDAT.

In terms of tissue distribution, moderately expressed in all regions of the brain examined, as well as in testis and ovary, and low expression in all other tissues tested.

It is found in the cell membrane. In terms of biological role, potential calcium-dependent cell-adhesion protein. (Microbial infection) Acts as a receptor for Western equine encephalitis virus. The chain is Protocadherin-10 (PCDH10) from Homo sapiens (Human).